The following is a 373-amino-acid chain: MIMNDTTKVYNFSAGPAMIPREVLCQVKRELYNWKNLKKSIMEISHRSQEFISVVQEIKHNLRKLLHIPNSYKIVFCHGGARGQFSAIPMNFSKNANHSSHNNVVDYINSGYWSYSAALEAKKYCYTNILNVCKTNNKKQYILPMNTWEINDNSLYLHYCPNETIDGIAIHEEPKFNDKKIVIGDFSSTILSKRINLERYSFIYASSQKNIGPSGITLIIMHESLLQNINSYVPSILNYKILVNSNSMFNTPNTFSLYLSGLILKWIKKIGGIKEIEKRNIIKSNMLYNMIDSTDFYINDVVSNNRSRMNVPFTIINTKLHEIFVKEAYKYGLHALKGHNLKGGIRASIYNAMPIKGVLKLINFMKIFEKKYG.

Residue Arg47 coordinates L-glutamate. Pyridoxal 5'-phosphate contacts are provided by residues 81-82 (AR), Trp113, Thr164, Asp185, and Gln208. Position 209 is an N6-(pyridoxal phosphate)lysine (Lys209). 250 to 251 (NT) is a binding site for pyridoxal 5'-phosphate.

Belongs to the class-V pyridoxal-phosphate-dependent aminotransferase family. SerC subfamily. In terms of assembly, homodimer. Pyridoxal 5'-phosphate is required as a cofactor.

The protein localises to the cytoplasm. It catalyses the reaction O-phospho-L-serine + 2-oxoglutarate = 3-phosphooxypyruvate + L-glutamate. It carries out the reaction 4-(phosphooxy)-L-threonine + 2-oxoglutarate = (R)-3-hydroxy-2-oxo-4-phosphooxybutanoate + L-glutamate. The protein operates within amino-acid biosynthesis; L-serine biosynthesis; L-serine from 3-phospho-D-glycerate: step 2/3. It functions in the pathway cofactor biosynthesis; pyridoxine 5'-phosphate biosynthesis; pyridoxine 5'-phosphate from D-erythrose 4-phosphate: step 3/5. Its function is as follows. Catalyzes the reversible conversion of 3-phosphohydroxypyruvate to phosphoserine and of 3-hydroxy-2-oxo-4-phosphonooxybutanoate to phosphohydroxythreonine. This Buchnera aphidicola subsp. Baizongia pistaciae (strain Bp) protein is Phosphoserine aminotransferase.